The following is a 293-amino-acid chain: Probable porphobilinogen deaminase (293 aa).

Cys-233 is modified (S-(dipyrrolylmethanemethyl)cysteine).

The protein belongs to the HMBS family. Dipyrromethane is required as a cofactor.

It catalyses the reaction 4 porphobilinogen + H2O = hydroxymethylbilane + 4 NH4(+). The protein operates within porphyrin-containing compound metabolism; protoporphyrin-IX biosynthesis; coproporphyrinogen-III from 5-aminolevulinate: step 2/4. Its function is as follows. Tetrapolymerization of the monopyrrole PBG into the hydroxymethylbilane pre-uroporphyrinogen in several discrete steps. In Saccharolobus islandicus (strain L.S.2.15 / Lassen #1) (Sulfolobus islandicus), this protein is Probable porphobilinogen deaminase.